Here is a 340-residue protein sequence, read N- to C-terminus: Phenylalanine--tRNA ligase alpha subunit (340 aa).

Mg(2+) is bound at residue Glu-255.

This sequence belongs to the class-II aminoacyl-tRNA synthetase family. Phe-tRNA synthetase alpha subunit type 1 subfamily. In terms of assembly, tetramer of two alpha and two beta subunits. The cofactor is Mg(2+).

Its subcellular location is the cytoplasm. It catalyses the reaction tRNA(Phe) + L-phenylalanine + ATP = L-phenylalanyl-tRNA(Phe) + AMP + diphosphate + H(+). This chain is Phenylalanine--tRNA ligase alpha subunit, found in Heliobacterium modesticaldum (strain ATCC 51547 / Ice1).